Consider the following 502-residue polypeptide: tRNA-specific adenosine deaminase 1 (502 aa).

The 439-residue stretch at 63 to 501 folds into the A to I editase domain; that stretch reads SMGTGTKCIG…IRNPPDYHQF (439 aa). Residue H87 coordinates Zn(2+). E89 serves as the catalytic Proton donor. R93 and R94 together coordinate 1D-myo-inositol hexakisphosphate. C142 provides a ligand contact to Zn(2+). The residue at position 191 (S191) is a Phosphoserine. A Zn(2+)-binding site is contributed by C299. 1D-myo-inositol hexakisphosphate-binding residues include K302, R305, K435, and K470.

Belongs to the ADAT1 family. 1D-myo-inositol hexakisphosphate is required as a cofactor.

The catalysed reaction is adenosine(37) in tRNA(Ala) + H2O + H(+) = inosine(37) in tRNA(Ala) + NH4(+). Its function is as follows. Specifically deaminates adenosine-37 to inosine in tRNA-Ala. This Macaca fascicularis (Crab-eating macaque) protein is tRNA-specific adenosine deaminase 1 (ADAT1).